The primary structure comprises 59 residues: UPF0181 protein YoaH (59 aa).

Belongs to the UPF0181 family.

The sequence is that of UPF0181 protein YoaH from Shigella flexneri serotype 5b (strain 8401).